The primary structure comprises 138 residues: Putative pre-16S rRNA nuclease (138 aa).

Belongs to the YqgF nuclease family.

Its subcellular location is the cytoplasm. Could be a nuclease involved in processing of the 5'-end of pre-16S rRNA. The protein is Putative pre-16S rRNA nuclease of Bacillus pumilus (strain SAFR-032).